The sequence spans 1288 residues: Vacuolating cytotoxin autotransporter (1288 aa).

The first 33 residues, 1-33, serve as a signal peptide directing secretion; sequence MEIQQTHRKINRPLVSLVLAGALISAIPQESHA. The tract at residues 326–377 is disordered; that stretch reads PPEGGYKDKPNSTTSQSGTKNDKKEISQNNNSNTEVINPPNNTQKTETEPTQ. Polar residues predominate over residues 352 to 376; the sequence is SQNNNSNTEVINPPNNTQKTETEPT. The region spanning 1015-1288 is the Autotransporter domain; the sequence is KYEKPTNVWA…ASNLGMRYSF (274 aa).

It is found in the periplasm. It localises to the secreted. The protein resides in the cell surface. The protein localises to the cell outer membrane. In terms of biological role, induces vacuolation of eukaryotic cells. Causes ulceration and gastric lesions. The sequence is that of Vacuolating cytotoxin autotransporter (vacA) from Helicobacter pylori (strain J99 / ATCC 700824) (Campylobacter pylori J99).